We begin with the raw amino-acid sequence, 380 residues long: Cytochrome b (380 aa).

The next 4 membrane-spanning stretches (helical) occupy residues 34-54, 78-99, 114-134, and 179-199; these read SGSLLGLCLVVQILTGIFLAM, WFLRYVHANGVSLFFICMYCHI, WNVGVILFLVTILTAFMGYVL, and FFPFHFLFPFIIAALAVIHLV. Heme b contacts are provided by His84 and His98. Heme b contacts are provided by His183 and His197. His202 is an a ubiquinone binding site. 4 helical membrane-spanning segments follow: residues 227–247, 289–309, 321–341, and 348–369; these read TKDTVGFILLVAALFSLALLF, LGGVIALVAAILVLFLMPLLN, LSQAAFWLLVAHLFILTWIGS, and YVLLGQVASVLYFSLFIFGFPI.

Belongs to the cytochrome b family. As to quaternary structure, the main subunits of complex b-c1 are: cytochrome b, cytochrome c1 and the Rieske protein. Heme b is required as a cofactor.

The protein localises to the mitochondrion inner membrane. Its function is as follows. Component of the ubiquinol-cytochrome c reductase complex (complex III or cytochrome b-c1 complex) that is part of the mitochondrial respiratory chain. The b-c1 complex mediates electron transfer from ubiquinol to cytochrome c. Contributes to the generation of a proton gradient across the mitochondrial membrane that is then used for ATP synthesis. This is Cytochrome b (MT-CYB) from Strongylocentrotus purpuratus (Purple sea urchin).